The primary structure comprises 347 residues: Indole-3-glycerol phosphate lyase, chloroplastic (347 aa).

Disordered stretches follow at residues 1–38 and 64–89; these read MAFA…TPRR and APPQ…RSRP. The transit peptide at 1–53 directs the protein to the chloroplast; that stretch reads MAFAPKTSSSSSLSSALQAAQSPPLLLRRMSSTATPRRRYDAAVVVTTTTTAR. Positions 8–27 are enriched in low complexity; it reads SSSSSLSSALQAAQSPPLLL. Positions 64-76 are enriched in pro residues; that stretch reads APPQAPAPAPVPP.

This sequence belongs to the TrpA family. Tetramer of two alpha and two beta chains for the tryptophan synthase activity. Homodimer of alpha chains for the indole-3-glycerol phosphate lyase activity.

The protein resides in the plastid. Its subcellular location is the chloroplast. It catalyses the reaction (1S,2R)-1-C-(indol-3-yl)glycerol 3-phosphate = indole + D-glyceraldehyde 3-phosphate. The catalysed reaction is (1S,2R)-1-C-(indol-3-yl)glycerol 3-phosphate + L-serine = D-glyceraldehyde 3-phosphate + L-tryptophan + H2O. It participates in secondary metabolite biosynthesis; 2,4-dihydroxy-1,4-benzoxazin-3-one biosynthesis; 2,4-dihydroxy-1,4-benzoxazin-3-one from indoleglycerol phosphate: step 1/5. It functions in the pathway amino-acid biosynthesis; L-tryptophan biosynthesis; L-tryptophan from chorismate: step 5/5. In terms of biological role, the alpha subunit is responsible for the aldol cleavage of indoleglycerol phosphate to indole and glyceraldehyde 3-phosphate. In bacteria, tryptophan synthase alpha (TSA) activity is almost completely dependent on formation of an active alpha2beta2 complex with tryptophan synthase beta (TSB), and indole is usually not released during tryptophan synthesis. In maize, the TSA homolog BX1 catalyzes the formation of free indole from indole-3-glycerol phosphate, independently of TSB. This chain is Indole-3-glycerol phosphate lyase, chloroplastic (BX1), found in Zea mays (Maize).